The primary structure comprises 123 residues: Small ribosomal subunit protein uS13 (123 aa).

The disordered stretch occupies residues 94-123 (AGLPVRGQRTKTNARTRKGPKKTVGVQRKK). Basic residues predominate over residues 101-123 (QRTKTNARTRKGPKKTVGVQRKK).

Belongs to the universal ribosomal protein uS13 family. In terms of assembly, part of the 30S ribosomal subunit. Forms a loose heterodimer with protein S19. Forms two bridges to the 50S subunit in the 70S ribosome.

In terms of biological role, located at the top of the head of the 30S subunit, it contacts several helices of the 16S rRNA. In the 70S ribosome it contacts the 23S rRNA (bridge B1a) and protein L5 of the 50S subunit (bridge B1b), connecting the 2 subunits; these bridges are implicated in subunit movement. Contacts the tRNAs in the A and P-sites. This chain is Small ribosomal subunit protein uS13, found in Acetivibrio thermocellus (strain ATCC 27405 / DSM 1237 / JCM 9322 / NBRC 103400 / NCIMB 10682 / NRRL B-4536 / VPI 7372) (Clostridium thermocellum).